A 431-amino-acid polypeptide reads, in one-letter code: Enolase (431 aa).

Gln-163 contacts (2R)-2-phosphoglycerate. Glu-205 (proton donor) is an active-site residue. Asp-242, Glu-288, and Asp-315 together coordinate Mg(2+). Positions 340, 369, 370, and 391 each coordinate (2R)-2-phosphoglycerate. Lys-340 (proton acceptor) is an active-site residue.

It belongs to the enolase family. Mg(2+) is required as a cofactor.

The protein localises to the cytoplasm. It localises to the secreted. The protein resides in the cell surface. The catalysed reaction is (2R)-2-phosphoglycerate = phosphoenolpyruvate + H2O. Its pathway is carbohydrate degradation; glycolysis; pyruvate from D-glyceraldehyde 3-phosphate: step 4/5. In terms of biological role, catalyzes the reversible conversion of 2-phosphoglycerate (2-PG) into phosphoenolpyruvate (PEP). It is essential for the degradation of carbohydrates via glycolysis. This is Enolase from Acholeplasma laidlawii (strain PG-8A).